Here is a 726-residue protein sequence, read N- to C-terminus: Penicillin-binding protein 1A (726 aa).

The Cytoplasmic segment spans residues 1 to 3; the sequence is MKK. The helical; Signal-anchor for type II membrane protein transmembrane segment at 4–24 threads the bilayer; the sequence is LVIGILGIVIALFVGLLVFLI. The Periplasmic portion of the chain corresponds to 25-726; it reads PIYKNLPDPK…SDLNAILGLR (702 aa). The segment at 45–213 is transglycosylase; the sequence is SEVYDAKGRL…AKYNPFYHPE (169 aa). Catalysis depends on Glu83, which acts as the Proton donor; for transglycosylase activity. Positions 379–662 are transpeptidase; that stretch reads KYLGGNRAEI…SRVALPIWID (284 aa). The active-site Acyl-ester intermediate; for transpeptidase activity is the Ser432.

In the N-terminal section; belongs to the glycosyltransferase 51 family. This sequence in the C-terminal section; belongs to the transpeptidase family.

Its subcellular location is the cell inner membrane. It catalyses the reaction [GlcNAc-(1-&gt;4)-Mur2Ac(oyl-L-Ala-gamma-D-Glu-L-Lys-D-Ala-D-Ala)](n)-di-trans,octa-cis-undecaprenyl diphosphate + beta-D-GlcNAc-(1-&gt;4)-Mur2Ac(oyl-L-Ala-gamma-D-Glu-L-Lys-D-Ala-D-Ala)-di-trans,octa-cis-undecaprenyl diphosphate = [GlcNAc-(1-&gt;4)-Mur2Ac(oyl-L-Ala-gamma-D-Glu-L-Lys-D-Ala-D-Ala)](n+1)-di-trans,octa-cis-undecaprenyl diphosphate + di-trans,octa-cis-undecaprenyl diphosphate + H(+). It carries out the reaction Preferential cleavage: (Ac)2-L-Lys-D-Ala-|-D-Ala. Also transpeptidation of peptidyl-alanyl moieties that are N-acyl substituents of D-alanine.. It participates in cell wall biogenesis; peptidoglycan biosynthesis. This chain is Penicillin-binding protein 1A (mrcA), found in Aquifex aeolicus (strain VF5).